The chain runs to 365 residues: Aminotransferase poxL (365 aa).

Arg-92 is a pyridoxal 5'-phosphate binding site. Lys-193 carries the N6-(pyridoxal phosphate)lysine modification. Residue Glu-229 coordinates pyridoxal 5'-phosphate.

It belongs to the class-IV pyridoxal-phosphate-dependent aminotransferase family. The cofactor is pyridoxal 5'-phosphate.

It functions in the pathway secondary metabolite biosynthesis. Functionally, aminotransferase; part of the gene cluster that mediates the biosynthesis of oxaleimides, cytotoxic compounds containing an unusual disubstituted succinimide moiety. The first step of the pathway is provided by the HR-PKS poxF that serves in a new mode of collaborative biosynthesis with the PKS-NRPS poxE, by providing the olefin containing amino acid substrate via the synthesis of an ACP-bound dec-4-enoate. The cytochrome P450 monooxygenase poxM-catalyzed oxidation at the alpha-position creates the enzyme-bound 2-hydroxydec-4-enoyl-ACP thioester, which may be prone to spontaneous hydrolysis to yield 2-hydroxydec-4-enoic acid due to increased electrophilicity of the carbonyl. 2-hydroxydec-4-enoic acid can then be further oxidized by poxM to yield the alpha-ketoacid 2-oxodec-4-enoicacid, which is reductively aminated by the aminotransferase poxL to yield (S,E)-2-aminodec-4-enoic acid. The Hybrid PKS-NRPS synthetase poxE then performs condensation between the octaketide product of its PKS modules and the amino group of (S,E)-2-aminodec-4-enoic acid which is activated and incorporated by the adenylation domain. The resulting aminoacyl product can be cyclized by the Diels-Alderase PoxQ and reductively released by the reductive (R) domain of poxE to yield an aldehyde intermediate. The released aldehyde is then substrate for a Knoevenagel condensation by the hydrolyase poxO followed by an oxidation at the 5-position of the pyrrolidone ring. The presence of the olefin from the amino acid building block allows for migration of the substituted allyl group to occur. This allylic transposition reaction takes place in a conjugate addition, semipinacol-like fashion to yield a succinimide intermediate. Iterative two-electron oxidations of the C7 methyl of the succinimide intermediate to the carboxylic acid can be catalyzed by one of two remaining cytochrome P450 monooxygenasess poxC or poxD to yield oxaleimide A. Subsequent oxidation yields the maleimide scaffold oxaleimide I. Both oxaleimide A and oxaleimide I can undergo oxidative modifications in the decalin ring to yield the series of products oxaleimides B to H. This Penicillium oxalicum (strain 114-2 / CGMCC 5302) (Penicillium decumbens) protein is Aminotransferase poxL.